A 705-amino-acid polypeptide reads, in one-letter code: MPRLTPIVNYRNIGISAHIDAGKTTTTERILFYTGVNHKLGEVHHGSATMDWMAQEQERGITITSAATTCFWSGMSNQFSSHRINIIDTPGHVDFTIEVERSMRILDGAIMVYCAVGGVQPQSETVWRQANKYNVPRIAFINKMDRTGANYFNVINQIKDKLYANPIPIQLPIGKENNFVGIIDLIKMKSIYWSEIDQGITFEYKEIPKDLMVLSNSYRNILLETSAEASEKLTEKYLYKNLTEQDIIEGLRIRSLKNEIIPVTCGSAFKNKGIQSMLDTVINYLPSPKDIKYSKKNKFLSKNYKKSILPKDNEPFSALAFKIANDPFVGNLTFFRVYSGKIRSGNTVLNSAKDKQERFGRIVQMHANKREEIKEVRSGDIAAAIGLKDVTTGDTLCDPLHPIILEKMEFPEPVISVAVEPKTKSDQEKMSSALNRLAKEDPSFRVSSDEESGQTIISGMGELHLEILIDRMYREFNVRSNVGKPQVSYRETIKSCVEEEGKFIRQSGGRGQFGHVWLRIEPNKSNIAKNKNNYTFINKIVGGAIPKEFIPAIDKGIQEQLSNGVLAGYPIVDVCVTVFDGSYHEVDSSEIAFKIAASIAFKSAFMKASPILLEPIMKVEVETPNEYMGDVIGDLNRRRGIIDGMQDINMGKIIISKIPLSEMFGYATDLRSQTQGRASYSMEFLRYNELPNNITESIINSNQLK.

In terms of domain architecture, tr-type G spans valine 8–lysine 289. Residues alanine 17 to threonine 24, aspartate 88 to histidine 92, and asparagine 142 to aspartate 145 each bind GTP.

The protein belongs to the TRAFAC class translation factor GTPase superfamily. Classic translation factor GTPase family. EF-G/EF-2 subfamily.

It is found in the cytoplasm. In terms of biological role, catalyzes the GTP-dependent ribosomal translocation step during translation elongation. During this step, the ribosome changes from the pre-translocational (PRE) to the post-translocational (POST) state as the newly formed A-site-bound peptidyl-tRNA and P-site-bound deacylated tRNA move to the P and E sites, respectively. Catalyzes the coordinated movement of the two tRNA molecules, the mRNA and conformational changes in the ribosome. This Wigglesworthia glossinidia brevipalpis protein is Elongation factor G.